Reading from the N-terminus, the 1024-residue chain is Beta-galactosidase (1024 aa).

Residues Asn103 and Asp202 each contribute to the substrate site. Asp202 contributes to the Na(+) binding site. Positions 417, 419, and 462 each coordinate Mg(2+). Substrate contacts are provided by residues Glu462 and 538 to 541 (EYAH). The active-site Proton donor is the Glu462. The active-site Nucleophile is Glu538. Position 598 (Asn598) interacts with Mg(2+). The Na(+) site is built by Phe602 and Asn605. The substrate site is built by Asn605 and Trp1000.

Belongs to the glycosyl hydrolase 2 family. Homotetramer. Mg(2+) serves as cofactor. Requires Na(+) as cofactor.

It carries out the reaction Hydrolysis of terminal non-reducing beta-D-galactose residues in beta-D-galactosides.. The chain is Beta-galactosidase from Escherichia coli O9:H4 (strain HS).